The following is a 224-amino-acid chain: Thylakoid lumenal 15 kDa protein 1, chloroplastic (224 aa).

Residues 1-34 (MVILSNVSLFSCCNISQKPSLFSPSSRSSHCPIR) constitute a chloroplast transit peptide. The transit peptide at 35–81 (CSQSQEGKEVVTSPLRSVVWSLGEEVSKRSLFALVSASLFFVDPALA) directs the protein to the thylakoid. Pentapeptide repeat domains follow at residues 116-155 (SILR…DFSL) and 156-196 (ANVT…PLRD).

The protein localises to the plastid. It localises to the chloroplast thylakoid lumen. In Arabidopsis thaliana (Mouse-ear cress), this protein is Thylakoid lumenal 15 kDa protein 1, chloroplastic.